A 139-amino-acid polypeptide reads, in one-letter code: Putative pre-16S rRNA nuclease (139 aa).

Belongs to the YqgF nuclease family.

Its subcellular location is the cytoplasm. Could be a nuclease involved in processing of the 5'-end of pre-16S rRNA. The sequence is that of Putative pre-16S rRNA nuclease from Pectobacterium carotovorum subsp. carotovorum (strain PC1).